A 326-amino-acid polypeptide reads, in one-letter code: Malate dehydrogenase (326 aa).

Position 11–17 (11–17 (GAAGQIG)) interacts with NAD(+). The substrate site is built by R92 and R98. Residues N105, Q112, and 129 to 131 (VGN) contribute to the NAD(+) site. Residues N131 and R162 each contribute to the substrate site. The Proton acceptor role is filled by H187.

The protein belongs to the LDH/MDH superfamily. MDH type 2 family.

The catalysed reaction is (S)-malate + NAD(+) = oxaloacetate + NADH + H(+). Catalyzes the reversible oxidation of malate to oxaloacetate. The sequence is that of Malate dehydrogenase from Chromobacterium violaceum (strain ATCC 12472 / DSM 30191 / JCM 1249 / CCUG 213 / NBRC 12614 / NCIMB 9131 / NCTC 9757 / MK).